The sequence spans 204 residues: Large ribosomal subunit protein bL25 (204 aa).

It belongs to the bacterial ribosomal protein bL25 family. CTC subfamily. Part of the 50S ribosomal subunit; part of the 5S rRNA/L5/L18/L25 subcomplex. Contacts the 5S rRNA. Binds to the 5S rRNA independently of L5 and L18.

This is one of the proteins that binds to the 5S RNA in the ribosome where it forms part of the central protuberance. The chain is Large ribosomal subunit protein bL25 from Pseudomonas syringae pv. syringae (strain B728a).